The primary structure comprises 190 residues: uncharacterized protein (190 aa).

One can recognise an HTH tetR-type domain in the interval 1–58; the sequence is MDKRILAETFRLIKQKGFSFTMNDLAAALGTSKRTLYAYYSSKDQLVEAVVEQFIAEM. A DNA-binding region (H-T-H motif) is located at residues 21–40; that stretch reads TMNDLAAALGTSKRTLYAYY.

This is an uncharacterized protein from Bacillus subtilis (strain 168).